The sequence spans 185 residues: ATP-dependent protease subunit HslV (185 aa).

Thr-13 is a catalytic residue. Positions 167, 170, and 173 each coordinate Na(+).

It belongs to the peptidase T1B family. HslV subfamily. In terms of assembly, a double ring-shaped homohexamer of HslV is capped on each side by a ring-shaped HslU homohexamer. The assembly of the HslU/HslV complex is dependent on binding of ATP.

Its subcellular location is the cytoplasm. It catalyses the reaction ATP-dependent cleavage of peptide bonds with broad specificity.. With respect to regulation, allosterically activated by HslU binding. Its function is as follows. Protease subunit of a proteasome-like degradation complex believed to be a general protein degrading machinery. The polypeptide is ATP-dependent protease subunit HslV (Sinorhizobium fredii (strain NBRC 101917 / NGR234)).